The following is a 165-amino-acid chain: Lipoprotein signal peptidase (165 aa).

The next 3 helical transmembrane spans lie at 9–29 (PFLW…LAVV), 65–85 (WQKY…LFFL), and 97–119 (TGYA…HGFV). Active-site residues include D121 and D139. A helical transmembrane segment spans residues 134–154 (VFNVADIAICIGAGLLAIDAF).

This sequence belongs to the peptidase A8 family.

The protein localises to the cell inner membrane. The catalysed reaction is Release of signal peptides from bacterial membrane prolipoproteins. Hydrolyzes -Xaa-Yaa-Zaa-|-(S,diacylglyceryl)Cys-, in which Xaa is hydrophobic (preferably Leu), and Yaa (Ala or Ser) and Zaa (Gly or Ala) have small, neutral side chains.. It functions in the pathway protein modification; lipoprotein biosynthesis (signal peptide cleavage). This protein specifically catalyzes the removal of signal peptides from prolipoproteins. The chain is Lipoprotein signal peptidase from Histophilus somni (strain 2336) (Haemophilus somnus).